Here is a 282-residue protein sequence, read N- to C-terminus: Undecaprenyl-diphosphatase (282 aa).

7 helical membrane passes run 39 to 59 (PGAA…LIYF), 85 to 105 (ATMG…GLLF), 115 to 135 (SLYW…LTEV), 153 to 173 (IGWK…IPGS), 196 to 216 (FSFL…LYET), 230 to 250 (LLVA…FLIT), and 260 to 280 (FIIY…TGAI).

It belongs to the UppP family.

Its subcellular location is the cell inner membrane. It carries out the reaction di-trans,octa-cis-undecaprenyl diphosphate + H2O = di-trans,octa-cis-undecaprenyl phosphate + phosphate + H(+). Its function is as follows. Catalyzes the dephosphorylation of undecaprenyl diphosphate (UPP). Confers resistance to bacitracin. The sequence is that of Undecaprenyl-diphosphatase from Chlorobium chlorochromatii (strain CaD3).